A 204-amino-acid polypeptide reads, in one-letter code: Somatotropin (204 aa).

A signal peptide spans Met1–Ser17. A Pyrrolidone carboxylic acid modification is found at Gln18. Position 36 (His36) interacts with Zn(2+). Cys69 and Cys177 form a disulfide bridge. Position 186 (Glu186) interacts with Zn(2+). Cys194 and Cys202 form a disulfide bridge.

This sequence belongs to the somatotropin/prolactin family.

It is found in the secreted. Functionally, growth hormone plays an important role in growth control and is involved in the regulation of several anabolic processes. Implicated as an osmoregulatory substance important for seawater adaptation. The sequence is that of Somatotropin (gh) from Sciaenops ocellatus (Red drum).